The following is an 860-amino-acid chain: DNA mismatch repair protein MutS (860 aa).

625–632 (GPNMGGKS) contributes to the ATP binding site.

The protein belongs to the DNA mismatch repair MutS family.

This protein is involved in the repair of mismatches in DNA. It is possible that it carries out the mismatch recognition step. This protein has a weak ATPase activity. The polypeptide is DNA mismatch repair protein MutS (Aeromonas hydrophila subsp. hydrophila (strain ATCC 7966 / DSM 30187 / BCRC 13018 / CCUG 14551 / JCM 1027 / KCTC 2358 / NCIMB 9240 / NCTC 8049)).